The sequence spans 140 residues: Probable deoxyuridine 5'-triphosphate nucleotidohydrolase (140 aa).

Residues 62 to 64 (RSG), 76 to 79 (GVID), arginine 130, and 135 to 136 (FG) contribute to the substrate site.

The protein belongs to the dUTPase family. In terms of assembly, homotrimer. Mg(2+) serves as cofactor.

The enzyme catalyses dUTP + H2O = dUMP + diphosphate + H(+). The protein operates within pyrimidine metabolism; dUMP biosynthesis; dUMP from dCTP (dUTP route): step 2/2. Functionally, this enzyme is involved in nucleotide metabolism: it produces dUMP, the immediate precursor of thymidine nucleotides and it decreases the intracellular concentration of dUTP so that uracil cannot be incorporated into DNA. The polypeptide is Probable deoxyuridine 5'-triphosphate nucleotidohydrolase (Schizosaccharomyces pombe (strain 972 / ATCC 24843) (Fission yeast)).